Consider the following 291-residue polypeptide: D-alanyl-D-alanine carboxypeptidase (291 aa).

An N-terminal signal peptide occupies residues 1 to 29; it reads MRLRRAAATVITTGALLAAGTLGATPATA. The Acyl-ester intermediate role is filled by S64. The active-site Proton acceptor is the K67. S125 is a catalytic residue. K242 is a substrate binding site.

The protein belongs to the peptidase S11 family.

Its subcellular location is the secreted. It carries out the reaction Preferential cleavage: (Ac)2-L-Lys-D-Ala-|-D-Ala. Also transpeptidation of peptidyl-alanyl moieties that are N-acyl substituents of D-alanine.. Its pathway is cell wall biogenesis; peptidoglycan biosynthesis. In terms of biological role, removes C-terminal D-alanyl residues from sugar-peptide cell wall precursors. In Streptomyces sp. (strain K15), this protein is D-alanyl-D-alanine carboxypeptidase.